A 127-amino-acid chain; its full sequence is UPF0325 protein VIBHAR_03240 (127 aa).

Belongs to the UPF0325 family.

The polypeptide is UPF0325 protein VIBHAR_03240 (Vibrio campbellii (strain ATCC BAA-1116)).